A 590-amino-acid polypeptide reads, in one-letter code: Aspartate--tRNA(Asp/Asn) ligase (590 aa).

L-aspartate is bound at residue Glu-170. The aspartate stretch occupies residues 194–197; it reads QLFK. Arg-216 is an L-aspartate binding site. Residues 216-218 and Gln-225 contribute to the ATP site; that span reads RDE. Position 448 (His-448) interacts with L-aspartate. Glu-482 contributes to the ATP binding site. L-aspartate is bound at residue Arg-489. Residue 534–537 coordinates ATP; it reads GWDR. Residues 559–590 are disordered; that stretch reads GGVDPLTEAPAPITAQQRKESGIDAKPGKDGA. The segment covering 575–590 has biased composition (basic and acidic residues); that stretch reads QRKESGIDAKPGKDGA.

Belongs to the class-II aminoacyl-tRNA synthetase family. Type 1 subfamily. In terms of assembly, homodimer.

The protein resides in the cytoplasm. It carries out the reaction tRNA(Asx) + L-aspartate + ATP = L-aspartyl-tRNA(Asx) + AMP + diphosphate. In terms of biological role, aspartyl-tRNA synthetase with relaxed tRNA specificity since it is able to aspartylate not only its cognate tRNA(Asp) but also tRNA(Asn). Reaction proceeds in two steps: L-aspartate is first activated by ATP to form Asp-AMP and then transferred to the acceptor end of tRNA(Asp/Asn). The sequence is that of Aspartate--tRNA(Asp/Asn) ligase from Mycolicibacterium gilvum (strain PYR-GCK) (Mycobacterium gilvum (strain PYR-GCK)).